Consider the following 573-residue polypeptide: Putative inorganic phosphate transporter C1683.01 (573 aa).

6 helical membrane-spanning segments follow: residues 48–68 (MMLA…INLV), 100–120 (AASN…GDFF), 124–144 (FVYG…IAMP), 154–174 (MMWV…DYPM), 194–214 (LIFA…IILL), and 230–250 (LEGV…GVLI). The segment covering 261 to 270 (FKNSQQLNSG) has biased composition (polar residues). Disordered stretches follow at residues 261–280 (FKNS…TSLN) and 290–312 (PSVT…RSNT). The next 6 membrane-spanning stretches (helical) occupy residues 348–368 (HLLG…GVNL), 397–417 (LIIA…LVEI), 422–442 (WIQL…AGRW), 451–471 (FACF…TTFI), 487–507 (GISA…FNFL), and 510–530 (IIGY…GILF).

This sequence belongs to the major facilitator superfamily. Sugar transporter (TC 2.A.1.1) family.

The protein resides in the endoplasmic reticulum membrane. Its function is as follows. High-affinity transporter for external inorganic phosphate. The chain is Putative inorganic phosphate transporter C1683.01 from Schizosaccharomyces pombe (strain 972 / ATCC 24843) (Fission yeast).